Here is a 217-residue protein sequence, read N- to C-terminus: Probable transaldolase (217 aa).

Residue Lys-83 is the Schiff-base intermediate with substrate of the active site.

The protein belongs to the transaldolase family. Type 3B subfamily.

It is found in the cytoplasm. It carries out the reaction D-sedoheptulose 7-phosphate + D-glyceraldehyde 3-phosphate = D-erythrose 4-phosphate + beta-D-fructose 6-phosphate. It participates in carbohydrate degradation; pentose phosphate pathway; D-glyceraldehyde 3-phosphate and beta-D-fructose 6-phosphate from D-ribose 5-phosphate and D-xylulose 5-phosphate (non-oxidative stage): step 2/3. Its function is as follows. Transaldolase is important for the balance of metabolites in the pentose-phosphate pathway. The chain is Probable transaldolase from Bartonella bacilliformis (strain ATCC 35685 / KC583 / Herrer 020/F12,63).